The following is a 397-amino-acid chain: Arginine biosynthesis bifunctional protein ArgJ (397 aa).

Substrate-binding residues include Thr143, Lys169, Thr180, Glu266, Asn392, and Thr397. The Nucleophile role is filled by Thr180.

This sequence belongs to the ArgJ family. In terms of assembly, heterotetramer of two alpha and two beta chains.

It localises to the cytoplasm. The enzyme catalyses N(2)-acetyl-L-ornithine + L-glutamate = N-acetyl-L-glutamate + L-ornithine. It carries out the reaction L-glutamate + acetyl-CoA = N-acetyl-L-glutamate + CoA + H(+). Its pathway is amino-acid biosynthesis; L-arginine biosynthesis; L-ornithine and N-acetyl-L-glutamate from L-glutamate and N(2)-acetyl-L-ornithine (cyclic): step 1/1. It participates in amino-acid biosynthesis; L-arginine biosynthesis; N(2)-acetyl-L-ornithine from L-glutamate: step 1/4. Its activity is regulated as follows. Competitively inhibited by L-ornithine. Functionally, catalyzes two activities which are involved in the cyclic version of arginine biosynthesis: the synthesis of N-acetylglutamate from glutamate and acetyl-CoA as the acetyl donor, and of ornithine by transacetylation between N(2)-acetylornithine and glutamate. This chain is Arginine biosynthesis bifunctional protein ArgJ, found in Thermotoga neapolitana (strain ATCC 49049 / DSM 4359 / NBRC 107923 / NS-E).